Here is a 282-residue protein sequence, read N- to C-terminus: MKTNQNLRFYWRKTHNKLMLGLSYISVIIGLFWLCWILFTLITKGIPALSIDLFTQSTPAPNEKGGLLNALIGSFFIVGAGTLIGTPIGVLAGTYLAEYGRYSRFAQITRFLNDILLSAPSIIIGLFVYSLYVSKIEHFSGWAGAFALALLLIPIVVRTTDNMLLLVPNNLREAAAALGCSQWQVIMMICYRAAKSGILTGVLLAVARISGETAPLLFTALSNQFLSWNMNEPIANLPVVIYQYAASPFTDWNNLAWAGAALITLFVLCLNIFTRLFFQHKK.

The next 6 membrane-spanning stretches (helical) occupy residues 22–42 (LSYISVIIGLFWLCWILFTLI), 71–91 (LIGSFFIVGAGTLIGTPIGVL), 111–131 (FLNDILLSAPSIIIGLFVYSL), 136–156 (IEHFSGWAGAFALALLLIPIV), 198–218 (ILTGVLLAVARISGETAPLLF), and 254–274 (NLAWAGAALITLFVLCLNIFT). The 204-residue stretch at 71–274 (LIGSFFIVGA…LFVLCLNIFT (204 aa)) folds into the ABC transmembrane type-1 domain.

The protein belongs to the binding-protein-dependent transport system permease family. CysTW subfamily.

Its subcellular location is the cell inner membrane. In terms of biological role, part of the binding-protein-dependent transport system for phosphate; probably responsible for the translocation of the substrate across the membrane. The sequence is that of Phosphate transport system permease protein PstA (pstA) from Haemophilus influenzae (strain ATCC 51907 / DSM 11121 / KW20 / Rd).